Here is a 1942-residue protein sequence, read N- to C-terminus: Myosin-1 (1942 aa).

The Myosin N-terminal SH3-like domain maps to 33–82 (DAKSSVFVVDAKESFVKATVQSREGGKVTAKTEGGTTVTVKDDQVYPMNP). Serine 36 is subject to Phosphoserine. Phosphothreonine is present on residues threonine 64 and threonine 69. One can recognise a Myosin motor domain in the interval 86–785 (DKIEDMAMMT…LLGLLEEMRD (700 aa)). N6,N6,N6-trimethyllysine is present on lysine 130. 179–186 (GESGAGKT) serves as a coordination point for ATP. Tyrosine 389 carries the post-translational modification Phosphotyrosine. Threonine 419 carries the phosphothreonine modification. Tyrosine 424 is modified (phosphotyrosine). Serine 625 is subject to Phosphoserine. Positions 662–684 (LNKLMTNLRSTHPHFVRCIIPNE) are actin-binding. Position 760 is a pros-methylhistidine (histidine 760). The interval 764 to 778 (KFGHTKVFFKAGLLG) is actin-binding. The region spanning 788 to 817 (LAQLITRTQAMCRGYLARVEYQKMVERRES) is the IQ domain. The stretch at 846–1942 (LLKSAETEKE…EVHTKIISEE (1097 aa)) forms a coiled coil. Phosphoserine is present on residues serine 1095, serine 1099, serine 1165, serine 1240, and serine 1246. The tract at residues 1156–1175 (RLEEAGGATSAQIEMNKKRE) is disordered. At threonine 1258 the chain carries Phosphothreonine. The residue at position 1264 (serine 1264) is a Phosphoserine. Phosphothreonine occurs at positions 1268 and 1289. A phosphoserine mark is found at serine 1291, serine 1295, serine 1306, and serine 1309. Tyrosine 1467 bears the Phosphotyrosine mark. Threonine 1470 carries the post-translational modification Phosphothreonine. Phosphoserine is present on serine 1477. Phosphotyrosine is present on tyrosine 1495. Serine 1498 carries the phosphoserine modification. Threonine 1504 carries the phosphothreonine modification. Serine 1517 carries the post-translational modification Phosphoserine. Threonine 1520 is modified (phosphothreonine). Residues serine 1545, serine 1557, serine 1577, serine 1603, serine 1606, serine 1717, and serine 1729 each carry the phosphoserine modification. 2 positions are modified to phosphothreonine: threonine 1733 and threonine 1739. Serine 1742 is modified (phosphoserine).

Belongs to the TRAFAC class myosin-kinesin ATPase superfamily. Myosin family. In terms of assembly, muscle myosin is a hexameric protein that consists of 2 heavy chain subunits (MHC), 2 alkali light chain subunits (MLC) and 2 regulatory light chain subunits (MLC-2). Interacts with SLC26A5. As to expression, expressed in the cochlea (at protein level). Strongly expressed in spiral ganglion neurons with axonal sprouts and supporting cells around hair cells. In the organ of Corti, it is expressed in inner and outer hair cells, and in supporting cells.

The protein localises to the cytoplasm. It is found in the myofibril. In terms of biological role, required for normal hearing. It plays a role in cochlear amplification of auditory stimuli, likely through the positive regulation of prestin (SLC26A5) activity and outer hair cell (OHC) electromotility. The protein is Myosin-1 of Mus musculus (Mouse).